The sequence spans 444 residues: Xaa-Pro dipeptidase (444 aa).

Positions 247, 258, 340, 385, and 424 each coordinate Mn(2+).

It belongs to the peptidase M24B family. Bacterial-type prolidase subfamily. Mn(2+) serves as cofactor.

It catalyses the reaction Xaa-L-Pro dipeptide + H2O = an L-alpha-amino acid + L-proline. In terms of biological role, splits dipeptides with a prolyl residue in the C-terminal position. In Photorhabdus laumondii subsp. laumondii (strain DSM 15139 / CIP 105565 / TT01) (Photorhabdus luminescens subsp. laumondii), this protein is Xaa-Pro dipeptidase.